We begin with the raw amino-acid sequence, 279 residues long: Methyltransferase ausD (279 aa).

S-adenosyl-L-methionine is bound by residues 124 to 125 (DI) and 152 to 153 (DV).

Belongs to the class I-like SAM-binding methyltransferase superfamily. Homodimer.

Its pathway is secondary metabolite biosynthesis; terpenoid biosynthesis. Methyltransferase; part of the gene cluster A that mediates the biosynthesis of the fungal meroterpenoid acetoxydehydroaustin. The first step of the pathway is the synthesis of 3,5-dimethylorsellinic acid by the polyketide synthase ausA. 3,5-dimethylorsellinic acid is then prenylated by the polyprenyl transferase ausN. Further epoxidation by the FAD-dependent monooxygenase ausM and cyclization by the probable terpene cyclase ausL lead to the formation of protoaustinoid A. Protoaustinoid A is then oxidized to spiro-lactone preaustinoid A3 by the combined action of the FAD-binding monooxygenases ausB and ausC, and the dioxygenase ausE. Acid-catalyzed keto-rearrangement and ring contraction of the tetraketide portion of preaustinoid A3 by ausJ lead to the formation of preaustinoid A4. The aldo-keto reductase ausK, with the help of ausH, is involved in the next step by transforming preaustinoid A4 into isoaustinone which is in turn hydroxylated by the P450 monooxygenase ausI to form austinolide. The cytochrome P450 monooxygenase ausG then modifies austinolide to austinol. Austinol is further acetylated to austin by the O-acetyltransferase ausP, which spontaneously changes to dehydroaustin. The cytochrome P450 monooxygenase then converts dehydroaustin is into 7-dehydrodehydroaustin. The hydroxylation catalyzed by ausR permits the second O-acetyltransferase ausQ to add an additional acetyl group to the molecule, leading to the formation of acetoxydehydroaustin. Due to genetic rearrangements of the clusters and the subsequent loss of some enzymes, the end product of the Penicillium brasilianum austinoid biosynthesis clusters is acetoxydehydroaustin. The sequence is that of Methyltransferase ausD from Penicillium brasilianum.